Consider the following 102-residue polypeptide: A-type ATP synthase subunit F (102 aa).

The protein belongs to the V-ATPase F subunit family. Has multiple subunits with at least A(3), B(3), C, D, E, F, H, I and proteolipid K(x).

The protein localises to the cell membrane. Component of the A-type ATP synthase that produces ATP from ADP in the presence of a proton gradient across the membrane. This Thermococcus sibiricus (strain DSM 12597 / MM 739) protein is A-type ATP synthase subunit F.